Reading from the N-terminus, the 51-residue chain is DNA-binding protein (51 aa).

Positions Met1 to Tyr51 are disordered. A run of 2 repeats spans residues Arg5–Ser10 and Arg17–Ser22. The segment at Arg5–Ser22 is 2 X 6 AA repeats of R-R-R-R-S-S. A compositionally biased stretch (basic residues) spans Thr16–Tyr51.

Post-translationally, probably phosphorylated in infected cells.

It localises to the virion. Functionally, thought to be responsible for DNA condensation during packaging of the nucleocapsids. In Orgyia pseudotsugata (Douglas-fir tussock moth), this protein is DNA-binding protein (P6.5).